Here is a 117-residue protein sequence, read N- to C-terminus: Iron-sulfur cluster insertion protein ErpA (117 aa).

Residues C45, C109, and C111 each coordinate iron-sulfur cluster.

This sequence belongs to the HesB/IscA family. Homodimer. Iron-sulfur cluster serves as cofactor.

Required for insertion of 4Fe-4S clusters for at least IspG. This Hahella chejuensis (strain KCTC 2396) protein is Iron-sulfur cluster insertion protein ErpA.